The sequence spans 369 residues: Delta(6)-protoilludene synthase STEHIDRAFT_73029 (369 aa).

Residues D107, N243, S247, and E251 each contribute to the Mg(2+) site. The D(D/E)XX(D/E) motif signature appears at 107 to 111; that stretch reads DEYSD. The NSE motif motif lies at 243–251; sequence NDIVSYNLE. Residues R333 and Y334 each contribute to the (2E,6E)-farnesyl diphosphate site.

The protein belongs to the terpene synthase family. It depends on Mg(2+) as a cofactor. Mn(2+) is required as a cofactor. Ca(2+) serves as cofactor. The cofactor is Ni(2+). Requires Co(2+) as cofactor.

It carries out the reaction (2E,6E)-farnesyl diphosphate = Delta(6)-protoilludene + diphosphate. The enzyme catalyses (2E,6E)-farnesyl diphosphate = alpha-selinene + diphosphate. Ca(2+) switches the cyclization mechanism of delta(6)-protoilludene synthase from 1,11 to 1,10 cyclization which leads to the production of beta-elemene. Terpene cyclase that catalyzes the cyclization of farnesyl diphosphate (FPP) to delta(6)-protoilludene. In presence of Ca(2+), a significant switch from 1,11 to a dual 1,11/1,10 cyclization occurs, producing beta-elemene as the major product, with lower levels of delta(6)-protoilludene and (E)-beta-caryophyllene, and traces of beta-selinene and alpha-selinene. The protein is Delta(6)-protoilludene synthase STEHIDRAFT_73029 of Stereum hirsutum (strain FP-91666) (White-rot fungus).